We begin with the raw amino-acid sequence, 328 residues long: Ankyrin repeat domain-containing protein 2 (328 aa).

Residue serine 36 is modified to Phosphoserine. Residue serine 68 is modified to Phosphoserine; by PKB/AKT2. The interval 96 to 116 (RDALAAAQEPPPEPEEITGPV) is disordered. ANK repeat units follow at residues 116-145 (VNEETFLKAAVEGKMKVIDKYLADGGSADT), 149-178 (FRRTALHRASLEGHMEILEKLLENGATVDF), 182-211 (LDCTAMHWACRGGHLEVVRLLQSRGADTNV), 215-244 (LLSTPLHVAVRTGHVEIVEHFLSLGLDINA), and 248-277 (EGDSALHDAVRLNRYKIIKLLLLHGADMMA). The interval 297 to 328 (RHALEHPEPESEQNGLERPGSGRETPQPIPAQ) is disordered.

Interacts with ID3; both proteins cooperate in myoblast differentiation. Interacts with TTN/titin. Interacts (via ANK repeats) with TCAP; the interaction is direct. Interacts with TJP1 (via PDZ domains). Interacts with PML; the interaction is direct. Interacts with p53/TP53. Interacts with YBX1. Interacts with AKT2. Phosphorylation at Ser-68 by PKB/AKT2 in response to oxidative stress induces translocation to the nucleus and negatively regulates myoblast differentiation. As to expression, expressed by myoblasts (at protein level). Expressed in skeletal and cardiac muscles.

Its subcellular location is the cytoplasm. It is found in the myofibril. It localises to the sarcomere. The protein localises to the i band. The protein resides in the cytosol. Its subcellular location is the nucleus. It is found in the PML body. Functionally, functions as a negative regulator of myocyte differentiation. May interact with both sarcoplasmic structural proteins and nuclear proteins to regulate gene expression during muscle development and in response to muscle stress. The protein is Ankyrin repeat domain-containing protein 2 (Ankrd2) of Mus musculus (Mouse).